Consider the following 353-residue polypeptide: Anthranilate phosphoribosyltransferase (353 aa).

5-phospho-alpha-D-ribose 1-diphosphate is bound by residues glycine 87, 90–91 (GD), threonine 95, 97–100 (NIST), 115–123 (KHGNRAASS), and threonine 127. Residue glycine 87 participates in anthranilate binding. Position 99 (serine 99) interacts with Mg(2+). Residue asparagine 118 participates in anthranilate binding. Arginine 173 is an anthranilate binding site. Residues aspartate 231 and glutamate 232 each contribute to the Mg(2+) site.

Belongs to the anthranilate phosphoribosyltransferase family. Homodimer. Mg(2+) is required as a cofactor.

It carries out the reaction N-(5-phospho-beta-D-ribosyl)anthranilate + diphosphate = 5-phospho-alpha-D-ribose 1-diphosphate + anthranilate. It functions in the pathway amino-acid biosynthesis; L-tryptophan biosynthesis; L-tryptophan from chorismate: step 2/5. In terms of biological role, catalyzes the transfer of the phosphoribosyl group of 5-phosphorylribose-1-pyrophosphate (PRPP) to anthranilate to yield N-(5'-phosphoribosyl)-anthranilate (PRA). The sequence is that of Anthranilate phosphoribosyltransferase from Salinispora arenicola (strain CNS-205).